A 351-amino-acid polypeptide reads, in one-letter code: UDP-N-acetylglucosamine transporter slc35b4 (351 aa).

A run of 10 helical transmembrane segments spans residues 6-26 (LISLIPISMIMVGCCSNVISL), 37-57 (AILVTFFQFATVAFISFFVNI), 77-97 (IPLKTYFLMVSIFFILSVLNN), 104-124 (IPIPFHMIFRSSSLLSTIVIG), 136-156 (QILSLIMVTLGIIFATFSSMP), 173-193 (FSIGMLMLIAAMFLSSILGLI), 209-229 (TIFYSHLFSLPFFLLFKDDIL), 252-274 (TLWVYLIVNVLTQYVCIQGVFIL), 282-302 (TCTLVISIRKFLSIIISVIYF), and 306-326 (FTSLLFTGTILVFLGTFMYST).

This sequence belongs to the nucleotide-sugar transporter family. SLC35B subfamily.

The protein localises to the golgi apparatus membrane. Functionally, sugar transporter that specifically mediates the transport of UDP-N-acetylglucosamine (UDP-GlcNAc) from cytosol into Golgi. The protein is UDP-N-acetylglucosamine transporter slc35b4 (slc35b4) of Dictyostelium discoideum (Social amoeba).